The chain runs to 267 residues: Small ribosomal subunit protein mS23 (267 aa).

The interval 230 to 267 is disordered; sequence VKTASKDGKSSNGSMGAEDVVEKTTSAWETEFVEEESS.

This sequence belongs to the mitochondrion-specific ribosomal protein mS23 family. As to quaternary structure, component of the mitochondrial small ribosomal subunit.

Its subcellular location is the mitochondrion. This is Small ribosomal subunit protein mS23 (RSM25) from Meyerozyma guilliermondii (strain ATCC 6260 / CBS 566 / DSM 6381 / JCM 1539 / NBRC 10279 / NRRL Y-324) (Yeast).